The primary structure comprises 105 residues: Flowering-promoting factor 1-like protein 5 (105 aa).

It belongs to the FPF1 family.

The protein is Flowering-promoting factor 1-like protein 5 of Oryza sativa subsp. japonica (Rice).